The following is a 516-amino-acid chain: Probable D,D-dipeptide-binding periplasmic protein DdpA (516 aa).

A signal peptide spans methionine 1–alanine 25.

The protein belongs to the bacterial solute-binding protein 5 family. As to quaternary structure, the complex is composed of two ATP-binding proteins (DdpD and DdpF), two transmembrane proteins (DdpB and DdpC) and a solute-binding protein (DdpA).

It localises to the periplasm. In terms of biological role, part of the ABC transporter complex DdpABCDF, which is probably involved in D,D-dipeptide transport. This chain is Probable D,D-dipeptide-binding periplasmic protein DdpA (ddpA), found in Escherichia coli (strain K12).